The primary structure comprises 374 residues: MAGLVKAKDYDWKDSNMELFGSSKDRQVKKESAMTEKCWEPVGRATSPFLMVWRVNQFTLEPVPSDEIGNFYNGDSYVICKATRSPGGDKLLYNVHFWIGKHSTADEYGTAAYKTVELDTFLDDAAVQHREVEGYESQLFKSYFDKLVILKVILKGGYASGFRHVKPDEYRPRLLRFCKEGKTTYMRQVAFSKQSVHSGDVFILDLGSRAYQFNGSKCSAFEKSSAAAFLQDLESKRNGRCNTSVLDEADTPQDVGVLHEFWTALPDVPVKELEPPKEVIKSLYKLSDSSGKLELTIVSEGSASKHDIKPDDVYIILTKEGLFVYIGKDCSVLEKRNALSNAHKFLQTCPNPFLPITVVTDEQAESFLKGIWDE.

3 Gelsolin-like repeats span residues phenylalanine 58 to glycine 109, glutamate 180 to alanine 220, and glutamate 278 to lysine 369.

It belongs to the villin/gelsolin family.

Severin blocks the ends of F-actin and causes the fragmentation and depolymerization of actin filaments. This severin binds stably with actin both in a Ca(2+) dependent and a Ca(2+) independent manner. In Echinococcus granulosus (Hydatid tapeworm), this protein is Severin (AG8).